The following is a 207-amino-acid chain: Small ribosomal subunit protein uS4 (207 aa).

The disordered stretch occupies residues 31–52 (KAKFDSKPGQHGRTSGARTSDY). One can recognise an S4 RNA-binding domain in the interval 97–157 (CRLDNVVYRM…DKSKKQARIV (61 aa)).

The protein belongs to the universal ribosomal protein uS4 family. As to quaternary structure, part of the 30S ribosomal subunit. Contacts protein S5. The interaction surface between S4 and S5 is involved in control of translational fidelity.

One of the primary rRNA binding proteins, it binds directly to 16S rRNA where it nucleates assembly of the body of the 30S subunit. Functionally, with S5 and S12 plays an important role in translational accuracy. The polypeptide is Small ribosomal subunit protein uS4 (Acidovorax sp. (strain JS42)).